A 290-amino-acid polypeptide reads, in one-letter code: Outer dense fiber protein 4 (290 aa).

Phosphoserine is present on S28. Transmembrane regions (helical) follow at residues 44 to 64 (AQVV…VMVF), 125 to 145 (PVFG…FVLT), 164 to 184 (LIGI…LLLF), and 201 to 221 (IGWS…CGIL). Residues 247–290 (GPESLVSPSQTPSSQENSQESPKDDQKPSSPDKVVSPPQPDTTG) form a disordered region. The segment covering 252 to 266 (VSPSQTPSSQENSQE) has biased composition (polar residues).

Expressed in testis.

The protein localises to the membrane. Component of the outer dense fibers (ODF) of spermatozoa which could be involved in sperm tail structure, sperm movement and general organization of cellular cytoskeleton. The chain is Outer dense fiber protein 4 (Odf4) from Mus musculus (Mouse).